The primary structure comprises 327 residues: uncharacterized protein (327 aa).

This is an uncharacterized protein from Lepidoptera (butterflies and moths).